The following is a 921-amino-acid chain: Protein translocase subunit SecA (921 aa).

ATP is bound by residues Q87, 105–109 (GEGKT), and D515. Positions 575-594 (RRIDNQLRGRSGRQGDPGSS) are disordered. 4 residues coordinate Zn(2+): C905, C907, C916, and C917.

The protein belongs to the SecA family. Monomer and homodimer. Part of the essential Sec protein translocation apparatus which comprises SecA, SecYEG and auxiliary proteins SecDF-YajC and YidC. It depends on Zn(2+) as a cofactor.

Its subcellular location is the cell inner membrane. The protein localises to the cytoplasm. It carries out the reaction ATP + H2O + cellular proteinSide 1 = ADP + phosphate + cellular proteinSide 2.. Part of the Sec protein translocase complex. Interacts with the SecYEG preprotein conducting channel. Has a central role in coupling the hydrolysis of ATP to the transfer of proteins into and across the cell membrane, serving both as a receptor for the preprotein-SecB complex and as an ATP-driven molecular motor driving the stepwise translocation of polypeptide chains across the membrane. The protein is Protein translocase subunit SecA of Polynucleobacter necessarius subsp. necessarius (strain STIR1).